The following is a 159-amino-acid chain: H/ACA ribonucleoprotein complex subunit 2-like protein (159 aa).

The tract at residues 1–28 (MAKTPKKDKTEEKEEHEESGGNKEDRER) is disordered.

The protein belongs to the eukaryotic ribosomal protein eL8 family. In terms of assembly, component of the small nucleolar ribonucleoprotein particle containing H/ACA-type snoRNAs (H/ACA snoRNPs). Component of the telomerase holoenzyme complex.

Its subcellular location is the nucleus. The protein resides in the nucleolus. In terms of biological role, required for ribosome biogenesis. Part of a complex which catalyzes pseudouridylation of rRNA. This involves the isomerization of uridine such that the ribose is subsequently attached to C5, instead of the normal N1. Pseudouridine ('psi') residues may serve to stabilize the conformation of rRNAs. The sequence is that of H/ACA ribonucleoprotein complex subunit 2-like protein from Branchiostoma belcheri (Amphioxus).